Consider the following 200-residue polypeptide: Large ribosomal subunit protein uL4 (200 aa).

Positions 38 to 68 (GRQGSKQQKTRSDVRGGGKRPWRQKGTGRAR) are disordered. Basic residues predominate over residues 54-65 (GGKRPWRQKGTG).

The protein belongs to the universal ribosomal protein uL4 family. As to quaternary structure, part of the 50S ribosomal subunit.

Functionally, one of the primary rRNA binding proteins, this protein initially binds near the 5'-end of the 23S rRNA. It is important during the early stages of 50S assembly. It makes multiple contacts with different domains of the 23S rRNA in the assembled 50S subunit and ribosome. Forms part of the polypeptide exit tunnel. The sequence is that of Large ribosomal subunit protein uL4 from Pseudomonas fluorescens (strain Pf0-1).